Reading from the N-terminus, the 416-residue chain is Putative competence-damage inducible protein (416 aa).

The protein belongs to the CinA family.

This is Putative competence-damage inducible protein from Bacillus velezensis (strain DSM 23117 / BGSC 10A6 / LMG 26770 / FZB42) (Bacillus amyloliquefaciens subsp. plantarum).